Consider the following 356-residue polypeptide: 3,4-dihydroxy-2-butanone 4-phosphate synthase (356 aa).

The tract at residues 1 to 211 (MNAILSDQKT…ISDIVEYRMM (211 aa)) is DHBP synthase. D-ribulose 5-phosphate is bound by residues 38–39 (RE), Asp-43, 150–154 (RIGHT), and Glu-174. Glu-39 is a Mg(2+) binding site. Mg(2+) is bound at residue His-153. Positions 212–356 (NESLIRVIAE…KSTNVNETVA (145 aa)) are GTP cyclohydrolase II-like.

The protein in the N-terminal section; belongs to the DHBP synthase family. It in the C-terminal section; belongs to the GTP cyclohydrolase II family. Mg(2+) serves as cofactor. It depends on Mn(2+) as a cofactor.

It carries out the reaction D-ribulose 5-phosphate = (2S)-2-hydroxy-3-oxobutyl phosphate + formate + H(+). It functions in the pathway cofactor biosynthesis; riboflavin biosynthesis; 2-hydroxy-3-oxobutyl phosphate from D-ribulose 5-phosphate: step 1/1. Functionally, catalyzes the conversion of D-ribulose 5-phosphate to formate and 3,4-dihydroxy-2-butanone 4-phosphate. The polypeptide is 3,4-dihydroxy-2-butanone 4-phosphate synthase (ribB) (Sulfurospirillum multivorans (Dehalospirillum multivorans)).